Consider the following 120-residue polypeptide: Movement protein TGB2 (120 aa).

The Cytoplasmic portion of the chain corresponds to 1–16; sequence MSSTSEPTYQLAPPDS. A helical membrane pass occupies residues 17–37; sequence LKQVYLTLAAGFAVGLGIFLL. At 38–76 the chain is on the lumenal side; sequence RTNTLPHTGDNIHHLPHGGCYRDGTKSIRYNSPGVATSS. A helical transmembrane segment spans residues 77–97; sequence NIFLPAVAVLCILALLHVPFF. At 98 to 120 the chain is on the cytoplasmic side; that stretch reads QPDRVRRRCCRFYWCADPHHPTV.

Belongs to the Tymovirales TGBp2 protein family.

The protein resides in the host endoplasmic reticulum membrane. Plays a role in viral cell-to-cell propagation, by facilitating genome transport to neighboring plant cells through plasmosdesmata,. This chain is Movement protein TGB2 (ORF3), found in Lolium latent virus (isolate Lolium/USA/US1/-) (LoLV).